A 192-amino-acid polypeptide reads, in one-letter code: MILPQEFYFEDTTLVAQSLLGKVLNIRTDSGIQKARIIETEAYLGIEDPACHTFEDRRTERTKSMYLDGGHSYVYMIYGMYFCLNFVTRTHQHPEAVLIRAVEPLPAQENLRKKDLKTNGPGKLCKYYGITRKHDGLKLWKKSSDLYVTDEDFKVSKKQIIPTARVGVDYAGEAAKWPLRFYLRDHLFVSKK.

This sequence belongs to the DNA glycosylase MPG family.

The sequence is that of Putative 3-methyladenine DNA glycosylase from Bdellovibrio bacteriovorus (strain ATCC 15356 / DSM 50701 / NCIMB 9529 / HD100).